The sequence spans 113 residues: Nucleoid-associated protein CLH_3225 (113 aa).

Residues 1–14 (MAKGGFPGGFGGGN) show a composition bias toward gly residues. The tract at residues 1-31 (MAKGGFPGGFGGGNMNNLMKQAQKLQKQMED) is disordered.

The protein belongs to the YbaB/EbfC family. As to quaternary structure, homodimer.

It is found in the cytoplasm. The protein localises to the nucleoid. Functionally, binds to DNA and alters its conformation. May be involved in regulation of gene expression, nucleoid organization and DNA protection. This Clostridium botulinum (strain Alaska E43 / Type E3) protein is Nucleoid-associated protein CLH_3225.